Consider the following 482-residue polypeptide: Probable glycine dehydrogenase (decarboxylating) subunit 2 (482 aa).

Lys269 carries the post-translational modification N6-(pyridoxal phosphate)lysine.

It belongs to the GcvP family. C-terminal subunit subfamily. In terms of assembly, the glycine cleavage system is composed of four proteins: P, T, L and H. In this organism, the P 'protein' is a heterodimer of two subunits. Pyridoxal 5'-phosphate serves as cofactor.

The enzyme catalyses N(6)-[(R)-lipoyl]-L-lysyl-[glycine-cleavage complex H protein] + glycine + H(+) = N(6)-[(R)-S(8)-aminomethyldihydrolipoyl]-L-lysyl-[glycine-cleavage complex H protein] + CO2. In terms of biological role, the glycine cleavage system catalyzes the degradation of glycine. The P protein binds the alpha-amino group of glycine through its pyridoxal phosphate cofactor; CO(2) is released and the remaining methylamine moiety is then transferred to the lipoamide cofactor of the H protein. This is Probable glycine dehydrogenase (decarboxylating) subunit 2 from Pelodictyon phaeoclathratiforme (strain DSM 5477 / BU-1).